The primary structure comprises 437 residues: Histidinol dehydrogenase (437 aa).

Residues Tyr-137, Gln-199, and Asn-222 each coordinate NAD(+). Residues Ser-245, Gln-267, and His-270 each coordinate substrate. Zn(2+) contacts are provided by Gln-267 and His-270. Active-site proton acceptor residues include Glu-335 and His-336. 4 residues coordinate substrate: His-336, Asp-369, Glu-423, and His-428. Residue Asp-369 coordinates Zn(2+). Zn(2+) is bound at residue His-428.

The protein belongs to the histidinol dehydrogenase family. Requires Zn(2+) as cofactor.

The enzyme catalyses L-histidinol + 2 NAD(+) + H2O = L-histidine + 2 NADH + 3 H(+). Its pathway is amino-acid biosynthesis; L-histidine biosynthesis; L-histidine from 5-phospho-alpha-D-ribose 1-diphosphate: step 9/9. In terms of biological role, catalyzes the sequential NAD-dependent oxidations of L-histidinol to L-histidinaldehyde and then to L-histidine. The sequence is that of Histidinol dehydrogenase from Parasynechococcus marenigrum (strain WH8102).